A 307-amino-acid chain; its full sequence is MNGIINVYKEKGFTSFDVCAKLRGILKQKKIGHTGTLDPDAEGVLPVCVGNATKLCDLLTDKDKVYEAVLTLGIITDTEDMTGEVLERRLVTATYDRVLEVVEQFTRTYDQIPPMYSAIKVNGQKLYELARQGKVIERKPRTVTIHAIDILGVTPLEEQPEIVHEVRMRVSCSKGTYIRSLCRDIGEALQCGGCMKSLIRTQVSIFTLENTLRLAEIEECVKNQTLEQVLMPVDKLFLSMPKVVVKKESCKFLYNGNQLVEDNFTWEKVSDQINIDKIRVYDSEDVFTGIYEYDEKKNCYQPVKMFL.

Catalysis depends on Asp38, which acts as the Nucleophile.

It belongs to the pseudouridine synthase TruB family. Type 1 subfamily.

It carries out the reaction uridine(55) in tRNA = pseudouridine(55) in tRNA. In terms of biological role, responsible for synthesis of pseudouridine from uracil-55 in the psi GC loop of transfer RNAs. This chain is tRNA pseudouridine synthase B, found in Lachnoclostridium phytofermentans (strain ATCC 700394 / DSM 18823 / ISDg) (Clostridium phytofermentans).